The following is a 337-amino-acid chain: Large ribosomal subunit protein uL10 (337 aa).

Residues 309 to 337 (EEVVEEQEEVKEEEEEESDMASGLGALFG) form a disordered region. Over residues 310–327 (EVVEEQEEVKEEEEEESD) the composition is skewed to acidic residues.

It belongs to the universal ribosomal protein uL10 family. Part of the 50S ribosomal subunit. Forms part of the ribosomal stalk which helps the ribosome interact with GTP-bound translation factors. Forms a heptameric L10(L12)2(L12)2(L12)2 complex, where L10 forms an elongated spine to which the L12 dimers bind in a sequential fashion.

Its function is as follows. Forms part of the ribosomal stalk, playing a central role in the interaction of the ribosome with GTP-bound translation factors. The protein is Large ribosomal subunit protein uL10 of Methanococcoides burtonii (strain DSM 6242 / NBRC 107633 / OCM 468 / ACE-M).